Consider the following 321-residue polypeptide: Ornithine carbamoyltransferase (321 aa).

Carbamoyl phosphate contacts are provided by residues 53 to 56 (STRT), glutamine 80, arginine 104, and 131 to 134 (HPCQ). L-ornithine-binding positions include asparagine 166, aspartate 230, and 234 to 235 (SM). Residues 270-271 (CL) and arginine 298 contribute to the carbamoyl phosphate site.

Belongs to the aspartate/ornithine carbamoyltransferase superfamily. OTCase family.

The protein resides in the cytoplasm. The catalysed reaction is carbamoyl phosphate + L-ornithine = L-citrulline + phosphate + H(+). Its pathway is amino-acid degradation; L-arginine degradation via ADI pathway; carbamoyl phosphate from L-arginine: step 2/2. Reversibly catalyzes the transfer of the carbamoyl group from carbamoyl phosphate (CP) to the N(epsilon) atom of ornithine (ORN) to produce L-citrulline. The protein is Ornithine carbamoyltransferase of Bifidobacterium longum subsp. infantis (strain ATCC 15697 / DSM 20088 / JCM 1222 / NCTC 11817 / S12).